Reading from the N-terminus, the 202-residue chain is Securin (202 aa).

The interval 36–55 (DGRSQVSTPHVGKMFDAPPA) is disordered. The D-box signature appears at 61 to 64 (RKAL). 2 consecutive short sequence motifs (TEK-box) follow at residues 71-73 (TEK) and 94-96 (TEK). Residues 163–173 (PPSPLKMPPLL) carry the SH3-binding motif. Ser-165 carries the phosphoserine; by CDK1 modification.

Belongs to the securin family. As to quaternary structure, interacts with RPS10 and DNAJA1. Interacts with the caspase-like ESPL1, and prevents its protease activity probably by covering its active site. Interacts with TP53 and blocks its activity probably by blocking its binding to DNA. Interacts with the Ku 70 kDa subunit of ds-DNA kinase. Interacts with PTTG1IP. In terms of processing, phosphorylated at Ser-165 by CDK1 during mitosis. Post-translationally, phosphorylated in vitro by ds-DNA kinase. Ubiquitinated through 'Lys-11' linkage of ubiquitin moieties by the anaphase promoting complex (APC) at the onset of anaphase, conducting to its degradation. 'Lys-11'-linked ubiquitination is mediated by the E2 ligase UBE2C/UBCH10.

The protein localises to the cytoplasm. It localises to the nucleus. Regulatory protein, which plays a central role in chromosome stability, in the p53/TP53 pathway, and DNA repair. Probably acts by blocking the action of key proteins. During the mitosis, it blocks Separase/ESPL1 function, preventing the proteolysis of the cohesin complex and the subsequent segregation of the chromosomes. At the onset of anaphase, it is ubiquitinated, conducting to its destruction and to the liberation of ESPL1. Its function is however not limited to a blocking activity, since it is required to activate ESPL1. Negatively regulates the transcriptional activity and related apoptosis activity of TP53. The negative regulation of TP53 may explain the strong transforming capability of the protein when it is overexpressed. May also play a role in DNA repair via its interaction with Ku, possibly by connecting DNA damage-response pathways with sister chromatid separation. The protein is Securin (PTTG1) of Bos taurus (Bovine).